Here is a 295-residue protein sequence, read N- to C-terminus: Bifunctional protein FolD (295 aa).

Residues 166-168 (GRS), Ser-191, and Ile-232 each bind NADP(+).

The protein belongs to the tetrahydrofolate dehydrogenase/cyclohydrolase family. In terms of assembly, homodimer.

The catalysed reaction is (6R)-5,10-methylene-5,6,7,8-tetrahydrofolate + NADP(+) = (6R)-5,10-methenyltetrahydrofolate + NADPH. It carries out the reaction (6R)-5,10-methenyltetrahydrofolate + H2O = (6R)-10-formyltetrahydrofolate + H(+). It participates in one-carbon metabolism; tetrahydrofolate interconversion. In terms of biological role, catalyzes the oxidation of 5,10-methylenetetrahydrofolate to 5,10-methenyltetrahydrofolate and then the hydrolysis of 5,10-methenyltetrahydrofolate to 10-formyltetrahydrofolate. This chain is Bifunctional protein FolD, found in Rhodopseudomonas palustris (strain BisB18).